A 210-amino-acid chain; its full sequence is Synaptosomal-associated protein 23 (210 aa).

An N-acetylmethionine modification is found at Met-1. 4 positions are modified to phosphoserine: Ser-5, Ser-20, Ser-23, and Ser-34. Positions 14–76 (HQVTDESLES…REAEKTLTEL (63 aa)) constitute a t-SNARE coiled-coil homology 1 domain. Residues 23-76 (STRRILGLAIESQDAGIKTITMLDEQGEQLNRIEEGMDQINKDMREAEKTLTEL) adopt a coiled-coil conformation. S-palmitoyl cysteine attachment occurs at residues Cys-79, Cys-80, Cys-83, Cys-85, and Cys-87. The disordered stretch occupies residues 104-136 (GDGGDSSPSNVVSKQPSRITNGQPQQTTGAASG). Over residues 109–133 (SSPSNVVSKQPSRITNGQPQQTTGA) the composition is skewed to polar residues. Phosphoserine is present on residues Ser-110 and Ser-160. One can recognise a t-SNARE coiled-coil homology 2 domain in the interval 145–207 (DAREDEMEEN…DIANTRAKKL (63 aa)).

It belongs to the SNAP-25 family. In terms of assembly, homotetramer (via coiled-coil domain), also forms heterotetramers with STX4 and VAMP3. Found in a complex with VAMP8 and STX1A. Found in a complex with VAMP8 and STX4 in pancreas. Interacts simultaneously with SNAPIN and SYN4. Interacts with STX1A. Interacts with STX12. Interacts tightly to multiple syntaxins and synaptobrevins/VAMPs. Interacts with ZDHHC13 (via ANK repeats). Interacts with ZDHHC17 (via ANK repeats).

The protein localises to the cell membrane. It is found in the synapse. The protein resides in the synaptosome. It localises to the cytoplasmic vesicle membrane. In terms of biological role, essential component of the high affinity receptor for the general membrane fusion machinery and an important regulator of transport vesicle docking and fusion. The sequence is that of Synaptosomal-associated protein 23 (Snap23) from Rattus norvegicus (Rat).